A 904-amino-acid polypeptide reads, in one-letter code: Phosphoenolpyruvate carboxylase (904 aa).

Catalysis depends on residues H151 and K570.

This sequence belongs to the PEPCase type 1 family. Mg(2+) is required as a cofactor.

The enzyme catalyses oxaloacetate + phosphate = phosphoenolpyruvate + hydrogencarbonate. Forms oxaloacetate, a four-carbon dicarboxylic acid source for the tricarboxylic acid cycle. The polypeptide is Phosphoenolpyruvate carboxylase (Xanthomonas campestris pv. campestris (strain 8004)).